The chain runs to 257 residues: Homeobox protein goosecoid (257 aa).

A DNA-binding region (homeobox) is located at residues 160–219 (KRRHRTIFTDEQLEALENLFQETKYPDVGTREQLARKVHLREEKVEVWFKNRRAKWRRQK). The interval 213–257 (AKWRRQKRSSSEESENAEKWNKTSSSKASPEKREEEGKSDLDSDS) is disordered. Positions 241–257 (SPEKREEEGKSDLDSDS) are enriched in basic and acidic residues.

Belongs to the paired homeobox family. Bicoid subfamily.

The protein resides in the nucleus. Its function is as follows. Regulates chordin (CHRD). May play a role in spatial programing within discrete embryonic fields or lineage compartments during organogenesis. In concert with NKX3-2, plays a role in defining the structural components of the middle ear; required for the development of the entire tympanic ring. Probably involved in the regulatory networks that define neural crest cell fate specification and determine mesoderm cell lineages in mammals. This Gorilla gorilla gorilla (Western lowland gorilla) protein is Homeobox protein goosecoid (GSC).